A 993-amino-acid polypeptide reads, in one-letter code: DNA-binding protein SMUBP-2 (993 aa).

A2 carries the N-acetylalanine modification. Residues G213–T220, Q402, Y441, and E570 contribute to the ATP site. The segment at T637–R783 is SS DNA-binding. 3 disordered regions span residues Y650 to R723, L765 to T815, and R837 to V872. Composition is skewed to polar residues over residues P667–E683 and H703–D716. The 64-residue stretch at P721 to S784 folds into the R3H domain. The span at L765–A775 shows a compositional bias: basic and acidic residues. Positions S784 to Q794 are enriched in low complexity. Phosphoserine occurs at positions 797 and 800. Over residues R837 to K847 the composition is skewed to polar residues. The Nuclear localization signal motif lies at K862–K866. An AN1-type; degenerate zinc finger spans residues V889 to A938. Zn(2+)-binding residues include C911, C914, H928, and C930. Residues G953 to T993 are disordered. Residues T954–G976 are compositionally biased toward basic and acidic residues.

Belongs to the DNA2/NAM7 helicase family. Homooligomer. Interacts with RUVBL1. Interacts with RUVBL2. Interacts with GTF3C1. Interacts with ABT1. Interacts with ribosomes. In all tissues examined.

The protein resides in the nucleus. It localises to the cytoplasm. The protein localises to the cell projection. Its subcellular location is the axon. It catalyses the reaction ATP + H2O = ADP + phosphate + H(+). Functionally, 5' to 3' helicase that unwinds RNA and DNA duplexes in an ATP-dependent reaction. Specific to 5'-phosphorylated single-stranded guanine-rich sequences. May play a role in RNA metabolism, ribosome biogenesis or initiation of translation. May play a role in regulation of transcription. Interacts with tRNA-Tyr. This Mus musculus (Mouse) protein is DNA-binding protein SMUBP-2 (Ighmbp2).